Here is a 301-residue protein sequence, read N- to C-terminus: Large ribosomal subunit protein uL18z (301 aa).

The protein belongs to the universal ribosomal protein uL18 family. As to quaternary structure, component of the large ribosomal subunit (LSU). Expressed in seedlings, roots, stems, leaves, inflorescences and siliques.

The protein localises to the cytoplasm. It localises to the nucleus. It is found in the nucleolus. The protein resides in the nucleoplasm. Component of the ribosome, a large ribonucleoprotein complex responsible for the synthesis of proteins in the cell. The small ribosomal subunit (SSU) binds messenger RNAs (mRNAs) and translates the encoded message by selecting cognate aminoacyl-transfer RNA (tRNA) molecules. The large subunit (LSU) contains the ribosomal catalytic site termed the peptidyl transferase center (PTC), which catalyzes the formation of peptide bonds, thereby polymerizing the amino acids delivered by tRNAs into a polypeptide chain. The nascent polypeptides leave the ribosome through a tunnel in the LSU and interact with protein factors that function in enzymatic processing, targeting, and the membrane insertion of nascent chains at the exit of the ribosomal tunnel. Seems involved in the regulation of cell proliferation. Essential in leaf polarity establishment, probably having a role for translation in leaf dorsoventral patterning to specify leaf adaxial identity. The sequence is that of Large ribosomal subunit protein uL18z from Arabidopsis thaliana (Mouse-ear cress).